The following is a 217-amino-acid chain: 3,4-dihydroxy-2-butanone 4-phosphate synthase (217 aa).

Residues 37–38 (RE), Asp-42, 150–154 (RGGHT), and Glu-174 each bind D-ribulose 5-phosphate. Glu-38 serves as a coordination point for Mg(2+). Residue His-153 participates in Mg(2+) binding.

It belongs to the DHBP synthase family. In terms of assembly, homodimer. Mg(2+) is required as a cofactor. It depends on Mn(2+) as a cofactor.

The catalysed reaction is D-ribulose 5-phosphate = (2S)-2-hydroxy-3-oxobutyl phosphate + formate + H(+). The protein operates within cofactor biosynthesis; riboflavin biosynthesis; 2-hydroxy-3-oxobutyl phosphate from D-ribulose 5-phosphate: step 1/1. In terms of biological role, catalyzes the conversion of D-ribulose 5-phosphate to formate and 3,4-dihydroxy-2-butanone 4-phosphate. In Citrobacter koseri (strain ATCC BAA-895 / CDC 4225-83 / SGSC4696), this protein is 3,4-dihydroxy-2-butanone 4-phosphate synthase.